A 143-amino-acid polypeptide reads, in one-letter code: Gastrin-releasing peptide (143 aa).

The first 23 residues, Met1–Ala23, serve as a signal peptide directing secretion. The residue at position 50 (Met50) is a Methionine amide. Positions Ser54–Ser143 are excised as a propeptide. The disordered stretch occupies residues Lys91–Asp115. The span at Gly92–Leu111 shows a compositional bias: polar residues.

Belongs to the bombesin/neuromedin-B/ranatensin family.

The protein resides in the secreted. It localises to the cytoplasmic vesicle. The protein localises to the secretory vesicle lumen. It is found in the cell projection. Its subcellular location is the neuron projection. In terms of biological role, stimulates the release of gastrin and other gastrointestinal hormones. Contributes to the perception of prurient stimuli and to the transmission of itch signals in the spinal cord that promote scratching behavior. Contributes primarily to nonhistaminergic itch sensation. In one study, shown to act in the amygdala as part of an inhibitory network which inhibits memory specifically related to learned fear. In another study, shown to act on vasoactive intestinal peptide (VIP)-expressing cells in the auditory cortex, most likely via extrasynaptic diffusion from local and long-range sources, to mediate disinhibition of glutamatergic cells via VIP cell-specific GRPR signaling which leads to enhanced auditory fear memories. Contributes to the regulation of food intake. Inhibits voltage-gated sodium channels but enhances voltage-gated potassium channels in hippocampal neurons. Induces sighing by acting directly on the pre-Botzinger complex, a cluster of several thousand neurons in the ventrolateral medulla responsible for inspiration during respiratory activity. Its function is as follows. Induces an itch response through activation of receptors present on mast cells, triggering mast cell degranulation. In Cavia porcellus (Guinea pig), this protein is Gastrin-releasing peptide (GRP).